A 267-amino-acid polypeptide reads, in one-letter code: Orotidine 5'-phosphate decarboxylase (267 aa).

Lys-93 serves as the catalytic Proton donor.

The protein belongs to the OMP decarboxylase family. Type 2 subfamily.

The enzyme catalyses orotidine 5'-phosphate + H(+) = UMP + CO2. Its pathway is pyrimidine metabolism; UMP biosynthesis via de novo pathway; UMP from orotate: step 2/2. In Herpetosiphon aurantiacus (strain ATCC 23779 / DSM 785 / 114-95), this protein is Orotidine 5'-phosphate decarboxylase.